A 264-amino-acid polypeptide reads, in one-letter code: 3-methyl-2-oxobutanoate hydroxymethyltransferase (264 aa).

Positions 45 and 84 each coordinate Mg(2+). Residues 45–46 (DS), Asp84, and Lys112 contribute to the 3-methyl-2-oxobutanoate site. Glu114 is a binding site for Mg(2+). The active-site Proton acceptor is Glu181.

Belongs to the PanB family. Homodecamer; pentamer of dimers. Mg(2+) is required as a cofactor.

Its subcellular location is the cytoplasm. It catalyses the reaction 3-methyl-2-oxobutanoate + (6R)-5,10-methylene-5,6,7,8-tetrahydrofolate + H2O = 2-dehydropantoate + (6S)-5,6,7,8-tetrahydrofolate. It functions in the pathway cofactor biosynthesis; (R)-pantothenate biosynthesis; (R)-pantoate from 3-methyl-2-oxobutanoate: step 1/2. In terms of biological role, catalyzes the reversible reaction in which hydroxymethyl group from 5,10-methylenetetrahydrofolate is transferred onto alpha-ketoisovalerate to form ketopantoate. This chain is 3-methyl-2-oxobutanoate hydroxymethyltransferase, found in Shewanella oneidensis (strain ATCC 700550 / JCM 31522 / CIP 106686 / LMG 19005 / NCIMB 14063 / MR-1).